The following is a 409-amino-acid chain: MIANISPLAPSYTPELPAIDGITLRTVCAGYKNWQRNDLSLFLFQPNTVVAGLTTQSACPSPEVEWCRAAIKKGKARALVVNAGNSNAFTGHKGREAVAAITARVADHLKCALHEVFVSSTGVIGVPLPIKTACDGLEKAFSAEDVNWEHMANAIMTTDTFAKMSRQDITIQGKSVKMVGIIKGSGMIAPDMATMLGYIFTDAAVAPELLQKMLTKANKKSFSCITVDSDTSTSDTVLAFATAAAGNPILSSEEDKDADKLQEAVTAICLDLAQQVVRDGEGASKFISVSVNGAVSDESAHIIAMSIANSPLVKTAMAGEDANWGRVVMAVGKAGQPAERDLLSIRFGGIEVAAKGMVVPNYDEAPVAAHLKGKEIDISVDIGLGKGQAQVWTCDLTHGYISINADYRS.

Threonine 157, lysine 183, threonine 194, glutamate 281, asparagine 404, and serine 409 together coordinate substrate. The Nucleophile role is filled by threonine 194.

Belongs to the ArgJ family. In terms of assembly, heterotetramer of two alpha and two beta chains.

Its subcellular location is the cytoplasm. It catalyses the reaction N(2)-acetyl-L-ornithine + L-glutamate = N-acetyl-L-glutamate + L-ornithine. It carries out the reaction L-glutamate + acetyl-CoA = N-acetyl-L-glutamate + CoA + H(+). It participates in amino-acid biosynthesis; L-arginine biosynthesis; L-ornithine and N-acetyl-L-glutamate from L-glutamate and N(2)-acetyl-L-ornithine (cyclic): step 1/1. It functions in the pathway amino-acid biosynthesis; L-arginine biosynthesis; N(2)-acetyl-L-ornithine from L-glutamate: step 1/4. Functionally, catalyzes two activities which are involved in the cyclic version of arginine biosynthesis: the synthesis of N-acetylglutamate from glutamate and acetyl-CoA as the acetyl donor, and of ornithine by transacetylation between N(2)-acetylornithine and glutamate. This chain is Arginine biosynthesis bifunctional protein ArgJ, found in Zymomonas mobilis subsp. mobilis (strain ATCC 31821 / ZM4 / CP4).